Here is a 363-residue protein sequence, read N- to C-terminus: Type-2 angiotensin II receptor (363 aa).

The Extracellular portion of the chain corresponds to 1 to 45; that stretch reads MKDNFSFAATSRNITSSLPFVNLNMSGTNDLIFNCSHKPSDKHLE. 4 N-linked (GlcNAc...) asparagine glycosylation sites follow: N4, N13, N24, and N34. Cystine bridges form between C35–C290 and C117–C195. The chain crosses the membrane as a helical span at residues 46-70; the sequence is AIPVLYYLIFVIGFAVNIIVVSLFC. At 71–80 the chain is on the cytoplasmic side; the sequence is CQKGPKKVSS. The helical transmembrane segment at 81–104 threads the bilayer; it reads IYIFNLAVADLLLLATLPLWATYY. Positions 103 and 104 each coordinate angiotensin II. Over 105 to 114 the chain is Extracellular; sequence SYRYDWLFGP. A helical transmembrane segment spans residues 115–140; sequence VMCKVFGSFLTLNMFASIFFITCMSV. At 141–159 the chain is on the cytoplasmic side; the sequence is DRYQSVIYPFLSQRRNPWQ. The helical transmembrane segment at 160-181 threads the bilayer; it reads ASYVVPLVWCMACLSSLPTFYF. 3 residues coordinate angiotensin II: R182, Y204, and K215. At 182 to 206 the chain is on the extracellular side; it reads RDVRTIEYLGVNACVMAFPPEKYAQ. Residues 207 to 232 traverse the membrane as a helical segment; that stretch reads WSAGIALMKNVLGFIIPLIFIATCYF. At 233-257 the chain is on the cytoplasmic side; that stretch reads GIRKHLLKTNSYGKNRITRDQVLKM. Residues 258-281 traverse the membrane as a helical segment; that stretch reads AAAVVLAFIICWLPFHVLTFLDAL. D279 serves as a coordination point for angiotensin II. The Extracellular segment spans residues 282-294; the sequence is SWMGIINSCEVMA. The chain crosses the membrane as a helical span at residues 295–320; the sequence is VIDLALPFAILLGFTNSCVNPFLYCF. An angiotensin II-binding site is contributed by D297. The Cytoplasmic portion of the chain corresponds to 321–363; the sequence is VGNRFQQKLRSMFRVPITWLQGKRETMSCRKSSSLREMDTFVS. The interval 324-333 is helix VIII; it reads RFQQKLRSMF. S354 carries the post-translational modification Phosphoserine; by PKC.

This sequence belongs to the G-protein coupled receptor 1 family. As to quaternary structure, interacts with MTUS1.

Its subcellular location is the cell membrane. Its function is as follows. Receptor for angiotensin II, a vasoconstricting peptide. Signals primarily via a non-canonical G-protein- and beta-arrestin independent pathways. Cooperates with MTUS1 to inhibit ERK2 activation and cell proliferation. The protein is Type-2 angiotensin II receptor (AGTR2) of Meriones unguiculatus (Mongolian jird).